The sequence spans 246 residues: 1-(5-phosphoribosyl)-5-[(5-phosphoribosylamino)methylideneamino] imidazole-4-carboxamide isomerase (246 aa).

Residue aspartate 8 is the Proton acceptor of the active site. Aspartate 129 functions as the Proton donor in the catalytic mechanism.

This sequence belongs to the HisA/HisF family.

The protein localises to the cytoplasm. The enzyme catalyses 1-(5-phospho-beta-D-ribosyl)-5-[(5-phospho-beta-D-ribosylamino)methylideneamino]imidazole-4-carboxamide = 5-[(5-phospho-1-deoxy-D-ribulos-1-ylimino)methylamino]-1-(5-phospho-beta-D-ribosyl)imidazole-4-carboxamide. It participates in amino-acid biosynthesis; L-histidine biosynthesis; L-histidine from 5-phospho-alpha-D-ribose 1-diphosphate: step 4/9. This Nitrobacter hamburgensis (strain DSM 10229 / NCIMB 13809 / X14) protein is 1-(5-phosphoribosyl)-5-[(5-phosphoribosylamino)methylideneamino] imidazole-4-carboxamide isomerase.